The sequence spans 126 residues: Flagellar protein FliT (126 aa).

Residues 1–50 (MVSPHRLLKDYQQLLSLSQKILHLAISGQWDTLVEQEIVYVQSVEGLVNT) are required for homodimerization. A fliD binding region spans residues 60-98 (MRLHLRQILQEVMDNEAKVKQLLQKRMDELSSLMGQSLK).

This sequence belongs to the FliT family. In terms of assembly, homodimer. Interacts with FliD and FlhC.

Its subcellular location is the cytoplasm. It is found in the cytosol. Functionally, dual-function protein that regulates the transcription of class 2 flagellar operons and that also acts as an export chaperone for the filament-capping protein FliD. As a transcriptional regulator, acts as an anti-FlhDC factor; it directly binds FlhC, thus inhibiting the binding of the FlhC/FlhD complex to class 2 promoters, resulting in decreased expression of class 2 flagellar operons. As a chaperone, effects FliD transition to the membrane by preventing its premature polymerization, and by directing it to the export apparatus. The polypeptide is Flagellar protein FliT (Pectobacterium atrosepticum (strain SCRI 1043 / ATCC BAA-672) (Erwinia carotovora subsp. atroseptica)).